We begin with the raw amino-acid sequence, 443 residues long: Probable D-serine dehydratase (443 aa).

Lysine 118 bears the N6-(pyridoxal phosphate)lysine mark.

This sequence belongs to the serine/threonine dehydratase family. DsdA subfamily. The cofactor is pyridoxal 5'-phosphate.

The enzyme catalyses D-serine = pyruvate + NH4(+). The polypeptide is Probable D-serine dehydratase (Vibrio parahaemolyticus serotype O3:K6 (strain RIMD 2210633)).